The chain runs to 363 residues: NAD(P)H-quinone oxidoreductase subunit 1, chloroplastic (363 aa).

The next 6 membrane-spanning stretches (helical) occupy residues 28 to 48, 98 to 118, 129 to 149, 253 to 273, 300 to 320, and 336 to 356; these read WVFVPILIFIVGITISVLAIV, FSFGPAISVISIILSYSVIPF, IGVFLWIAISSIAPIGLLMSG, FGLFYVASYLNLLVSSLFVTV, VFVTIIGIFITLVKTFLFIFV, and LLNLGWKFLLPISLGNLLLTT.

This sequence belongs to the complex I subunit 1 family. NDH is composed of at least 16 different subunits, 5 of which are encoded in the nucleus.

The protein resides in the plastid. Its subcellular location is the chloroplast thylakoid membrane. The catalysed reaction is a plastoquinone + NADH + (n+1) H(+)(in) = a plastoquinol + NAD(+) + n H(+)(out). The enzyme catalyses a plastoquinone + NADPH + (n+1) H(+)(in) = a plastoquinol + NADP(+) + n H(+)(out). NDH shuttles electrons from NAD(P)H:plastoquinone, via FMN and iron-sulfur (Fe-S) centers, to quinones in the photosynthetic chain and possibly in a chloroplast respiratory chain. The immediate electron acceptor for the enzyme in this species is believed to be plastoquinone. Couples the redox reaction to proton translocation, and thus conserves the redox energy in a proton gradient. The protein is NAD(P)H-quinone oxidoreductase subunit 1, chloroplastic of Phaseolus vulgaris (Kidney bean).